A 150-amino-acid chain; its full sequence is Large ribosomal subunit protein bL9 (150 aa).

This sequence belongs to the bacterial ribosomal protein bL9 family.

Binds to the 23S rRNA. The sequence is that of Large ribosomal subunit protein bL9 from Pediococcus pentosaceus (strain ATCC 25745 / CCUG 21536 / LMG 10740 / 183-1w).